The sequence spans 429 residues: Adenylosuccinate synthetase (429 aa).

GTP-binding positions include 12 to 18 (GDEGKGK) and 40 to 42 (GHT). The active-site Proton acceptor is the aspartate 13. Positions 13 and 40 each coordinate Mg(2+). Residues 13–16 (DEGK), 38–41 (NAGH), threonine 128, arginine 142, glutamine 223, threonine 238, and arginine 302 contribute to the IMP site. The active-site Proton donor is histidine 41. 298 to 304 (TVTGRPR) is a binding site for substrate. GTP is bound by residues arginine 304, 330–332 (LLD), and 412–414 (SVG).

Belongs to the adenylosuccinate synthetase family. As to quaternary structure, homodimer. The cofactor is Mg(2+).

It is found in the cytoplasm. It catalyses the reaction IMP + L-aspartate + GTP = N(6)-(1,2-dicarboxyethyl)-AMP + GDP + phosphate + 2 H(+). Its pathway is purine metabolism; AMP biosynthesis via de novo pathway; AMP from IMP: step 1/2. Functionally, plays an important role in the de novo pathway of purine nucleotide biosynthesis. Catalyzes the first committed step in the biosynthesis of AMP from IMP. In Lactobacillus johnsonii (strain CNCM I-12250 / La1 / NCC 533), this protein is Adenylosuccinate synthetase.